The primary structure comprises 389 residues: MQQDMQNGGPGNTISNLSSALRQVNLGNSNTTTDQSNISIDFNQQQLLEEANQGSINAYNAQQQQQEHLQQQAQQQQLHMQQLQQAQQQQAQQQAHQQQQQVHQVQHQHVQQDHMPIGQSQQQAMYQGPNPIDSSRITKFFQNQPMEGYTLFSHRSAPNGFKVAIVLSELNMHYNTIFLDFNLGEHRAPEFVAINPNARVPALIDHNMENLSIWESGAIILHVVNKHYKETGNPLLWSDSLADQAQINAWLFFQTSGHAPMIGQALHFRYFHSQKVKSAVDRYTDEVRRVYGVVEMALAERREALIMDLDSENAAAYSAGTTPLSQSRFFDYPVWLVGDKITVADLSFVPWNNVVDRIGINIKVEFPEVYKWTKHMMRRPAVIKALRGE.

Positions 147–231 (EGYTLFSHRS…HVVNKHYKET (85 aa)) constitute a GST N-terminal domain. One can recognise a GST C-terminal domain in the interval 240–389 (SLADQAQINA…PAVIKALRGE (150 aa)).

This sequence belongs to the GST superfamily. In terms of assembly, homodimer.

Plays an important role in the cellular response to the nitrogen source. URE2 gene plays a major part in the repression of GLN1 and GDH2 genes by glutamine, and is required for the inactivation of glutamine synthetase. URE2 gene product may catalytically inactivate GLN3 in response to an increase in the intracellular concentration of glutamine. The sequence is that of Protein URE2 (URE2) from Kluyveromyces lactis (strain ATCC 8585 / CBS 2359 / DSM 70799 / NBRC 1267 / NRRL Y-1140 / WM37) (Yeast).